The chain runs to 427 residues: Zinc finger protein 2 (427 aa).

A KRAB domain is found at 14-85 (VTFEDVAVTF…GFHGSEEKTW (72 aa)). Residues 111 to 142 (HRKQSSLCPKREIQTLTGGPEPEKESPKARTC) form a disordered region. 8 consecutive C2H2-type zinc fingers follow at residues 169-191 (QECS…QRTH), 197-219 (YDCP…LMFH), 225-247 (YECD…QRIH), 253-275 (FKCN…QRIH), 281-303 (YECQ…LLTH), 309-331 (YECR…QKVH), 337-359 (YQCS…QKIH), and 365-387 (YECG…QRVH). The segment at 393 to 415 (FECSVCGKEFSSKSSIIQHQRRY) adopts a C2H2-type 9; degenerate zinc-finger fold.

It belongs to the krueppel C2H2-type zinc-finger protein family.

It localises to the nucleus. May be involved in transcriptional regulation. The sequence is that of Zinc finger protein 2 from Mus musculus (Mouse).